Consider the following 497-residue polypeptide: Probable pyruvate kinase, cytosolic isozyme (497 aa).

Arginine 37 serves as a coordination point for substrate. K(+) contacts are provided by asparagine 39, serine 41, aspartate 71, and threonine 72. 39–42 is an ATP binding site; it reads NFSH. 2 residues coordinate ATP: arginine 78 and lysine 163. Lysine 227 is a binding site for substrate. Glutamate 229 serves as a coordination point for Mg(2+). Residues glycine 252, aspartate 253, and threonine 285 each contribute to the substrate site. Aspartate 253 contributes to the Mg(2+) binding site.

The protein belongs to the pyruvate kinase family. As to quaternary structure, homotetramer. Requires Mg(2+) as cofactor. K(+) serves as cofactor.

The protein resides in the cytoplasm. It localises to the cytosol. The enzyme catalyses pyruvate + ATP = phosphoenolpyruvate + ADP + H(+). It participates in carbohydrate degradation; glycolysis; pyruvate from D-glyceraldehyde 3-phosphate: step 5/5. Key regulatory enzyme of the glycolytic pathway that catalyzes the final step of glycolysis, converting ADP and phosphoenolpyruvate (PEP) to ATP and pyruvate by essentially irreversible transphosphorylation. The sequence is that of Probable pyruvate kinase, cytosolic isozyme from Arabidopsis thaliana (Mouse-ear cress).